Reading from the N-terminus, the 221-residue chain is Protein-L-isoaspartate O-methyltransferase (221 aa).

Ser-57 is an active-site residue.

This sequence belongs to the methyltransferase superfamily. L-isoaspartyl/D-aspartyl protein methyltransferase family.

Its subcellular location is the cytoplasm. It catalyses the reaction [protein]-L-isoaspartate + S-adenosyl-L-methionine = [protein]-L-isoaspartate alpha-methyl ester + S-adenosyl-L-homocysteine. Its function is as follows. Catalyzes the methyl esterification of L-isoaspartyl residues in peptides and proteins that result from spontaneous decomposition of normal L-aspartyl and L-asparaginyl residues. It plays a role in the repair and/or degradation of damaged proteins. This chain is Protein-L-isoaspartate O-methyltransferase, found in Korarchaeum cryptofilum (strain OPF8).